The following is a 279-amino-acid chain: NAD kinase (279 aa).

The active-site Proton acceptor is the aspartate 57. Residues 57–58, 133–134, arginine 159, aspartate 161, and 172–177 each bind NAD(+); these read DG, NE, and TAYNKS.

This sequence belongs to the NAD kinase family. The cofactor is a divalent metal cation.

It is found in the cytoplasm. It carries out the reaction NAD(+) + ATP = ADP + NADP(+) + H(+). In terms of biological role, involved in the regulation of the intracellular balance of NAD and NADP, and is a key enzyme in the biosynthesis of NADP. Catalyzes specifically the phosphorylation on 2'-hydroxyl of the adenosine moiety of NAD to yield NADP. In Streptococcus pyogenes serotype M2 (strain MGAS10270), this protein is NAD kinase.